Reading from the N-terminus, the 404-residue chain is 4-hydroxy-3-methylbut-2-en-1-yl diphosphate synthase (flavodoxin) (404 aa).

[4Fe-4S] cluster is bound by residues C310, C313, C345, and E352.

Belongs to the IspG family. The cofactor is [4Fe-4S] cluster.

The enzyme catalyses (2E)-4-hydroxy-3-methylbut-2-enyl diphosphate + oxidized [flavodoxin] + H2O + 2 H(+) = 2-C-methyl-D-erythritol 2,4-cyclic diphosphate + reduced [flavodoxin]. It participates in isoprenoid biosynthesis; isopentenyl diphosphate biosynthesis via DXP pathway; isopentenyl diphosphate from 1-deoxy-D-xylulose 5-phosphate: step 5/6. Its function is as follows. Converts 2C-methyl-D-erythritol 2,4-cyclodiphosphate (ME-2,4cPP) into 1-hydroxy-2-methyl-2-(E)-butenyl 4-diphosphate. The protein is 4-hydroxy-3-methylbut-2-en-1-yl diphosphate synthase (flavodoxin) of Treponema pallidum (strain Nichols).